The following is a 232-amino-acid chain: 6-phosphogluconolactonase (232 aa).

Belongs to the glucosamine/galactosamine-6-phosphate isomerase family. 6-phosphogluconolactonase subfamily.

It catalyses the reaction 6-phospho-D-glucono-1,5-lactone + H2O = 6-phospho-D-gluconate + H(+). It participates in carbohydrate degradation; pentose phosphate pathway; D-ribulose 5-phosphate from D-glucose 6-phosphate (oxidative stage): step 2/3. Functionally, hydrolysis of 6-phosphogluconolactone to 6-phosphogluconate. This chain is 6-phosphogluconolactonase (pgl), found in Rhizobium meliloti (strain 1021) (Ensifer meliloti).